A 349-amino-acid polypeptide reads, in one-letter code: 5,10-methylenetetrahydromethanopterin reductase (349 aa).

The protein belongs to the mer family. In terms of assembly, homotetramer composed of two loosely associated dimers.

It localises to the cytoplasm. The catalysed reaction is 5-methyl-5,6,7,8-tetrahydromethanopterin + oxidized coenzyme F420-(gamma-L-Glu)(n) + H(+) = 5,10-methylenetetrahydromethanopterin + reduced coenzyme F420-(gamma-L-Glu)(n). It participates in one-carbon metabolism; methanogenesis from CO(2); methyl-coenzyme M from 5,10-methylene-5,6,7,8-tetrahydromethanopterin: step 1/2. Its activity is regulated as follows. Requires the presence of relatively high concentrations of either sulfate or phosphate for maximal activity. In terms of biological role, catalyzes the reversible reduction of methylene-H(4)MPT to methyl-H(4)MPT. The sequence is that of 5,10-methylenetetrahydromethanopterin reductase from Methanopyrus kandleri (strain AV19 / DSM 6324 / JCM 9639 / NBRC 100938).